Consider the following 325-residue polypeptide: tRNA U34 carboxymethyltransferase (325 aa).

Carboxy-S-adenosyl-L-methionine-binding positions include Lys-91, Trp-105, Lys-110, Gly-130, 152–154 (DPS), Met-196, Tyr-200, and Arg-315.

The protein belongs to the class I-like SAM-binding methyltransferase superfamily. CmoB family. In terms of assembly, homotetramer.

It carries out the reaction carboxy-S-adenosyl-L-methionine + 5-hydroxyuridine(34) in tRNA = 5-carboxymethoxyuridine(34) in tRNA + S-adenosyl-L-homocysteine + H(+). Functionally, catalyzes carboxymethyl transfer from carboxy-S-adenosyl-L-methionine (Cx-SAM) to 5-hydroxyuridine (ho5U) to form 5-carboxymethoxyuridine (cmo5U) at position 34 in tRNAs. The chain is tRNA U34 carboxymethyltransferase from Aeromonas hydrophila subsp. hydrophila (strain ATCC 7966 / DSM 30187 / BCRC 13018 / CCUG 14551 / JCM 1027 / KCTC 2358 / NCIMB 9240 / NCTC 8049).